We begin with the raw amino-acid sequence, 132 residues long: Chaperone protein SycT (132 aa).

Binds to YopT.

Its function is as follows. Functions as a specific chaperone for YopT. This is Chaperone protein SycT (sycT) from Yersinia pestis.